Consider the following 289-residue polypeptide: Serine/threonine-protein phosphatase Pgam5, mitochondrial (289 aa).

A helical transmembrane segment spans residues 7–23 (FVCGTGAGLAAYYLQRL).

The protein belongs to the phosphoglycerate mutase family. BPG-dependent PGAM subfamily. In terms of assembly, interacts with Pk92B/ASK1.

It localises to the mitochondrion outer membrane. The enzyme catalyses O-phospho-L-seryl-[protein] + H2O = L-seryl-[protein] + phosphate. It carries out the reaction O-phospho-L-threonyl-[protein] + H2O = L-threonyl-[protein] + phosphate. Displays phosphatase activity for serine/threonine residues, and dephosphorylates and activates Pk92B kinase. Has apparently no phosphoglycerate mutase activity. This Drosophila melanogaster (Fruit fly) protein is Serine/threonine-protein phosphatase Pgam5, mitochondrial (Pgam5).